The following is a 118-amino-acid chain: Basic phospholipase A2 PA-5 (118 aa).

Disulfide bonds link cysteine 11/cysteine 71, cysteine 27/cysteine 117, cysteine 29/cysteine 45, cysteine 44/cysteine 98, cysteine 51/cysteine 91, cysteine 60/cysteine 84, and cysteine 78/cysteine 89. Residues tyrosine 28, glycine 30, and glycine 32 each coordinate Ca(2+). Histidine 48 is an active-site residue. Position 49 (aspartate 49) interacts with Ca(2+). The active site involves aspartate 92.

Belongs to the phospholipase A2 family. Group I subfamily. D49 sub-subfamily. It depends on Ca(2+) as a cofactor. Expressed by the venom gland.

Its subcellular location is the secreted. The catalysed reaction is a 1,2-diacyl-sn-glycero-3-phosphocholine + H2O = a 1-acyl-sn-glycero-3-phosphocholine + a fatty acid + H(+). In terms of biological role, PLA2 catalyzes the calcium-dependent hydrolysis of the 2-acyl groups in 3-sn-phosphoglycerides. This chain is Basic phospholipase A2 PA-5, found in Pseudechis australis (Mulga snake).